The primary structure comprises 281 residues: MKNIGININTDKDISRNILDKIFQYIHEECSEAKIKVFYDSKGLDNEESRALDAVMVLGGDGTILGTARALAKYDVPIFGINRGHLGFLAEIELEDCKKAIKNLFKGQYKIENRIMLKCDLKGIDKKDDFLALNDIVLTKGNLSRIVKYSIYVDDVWYTTFVADGVIVATPTGSTAYSLSAGGPIVYPDLDVLEIAPICPHSLGIRPILLNGNSKINIRVLKKYEDPVLTIDGQRYKKVTVNEVTISKSEYKCRLIKFKDKDYFKILRTKISYRSRECEGE.

Residue aspartate 61 is the Proton acceptor of the active site. NAD(+) contacts are provided by residues 61–62 (DG), 134–135 (ND), arginine 145, aspartate 164, 175–180 (TAYSLS), and glutamine 234.

The protein belongs to the NAD kinase family. The cofactor is a divalent metal cation.

The protein resides in the cytoplasm. It catalyses the reaction NAD(+) + ATP = ADP + NADP(+) + H(+). Involved in the regulation of the intracellular balance of NAD and NADP, and is a key enzyme in the biosynthesis of NADP. Catalyzes specifically the phosphorylation on 2'-hydroxyl of the adenosine moiety of NAD to yield NADP. This chain is NAD kinase, found in Clostridium botulinum (strain Loch Maree / Type A3).